A 178-amino-acid polypeptide reads, in one-letter code: Large ribosomal subunit protein uL6 (178 aa).

This sequence belongs to the universal ribosomal protein uL6 family. In terms of assembly, part of the 50S ribosomal subunit.

In terms of biological role, this protein binds to the 23S rRNA, and is important in its secondary structure. It is located near the subunit interface in the base of the L7/L12 stalk, and near the tRNA binding site of the peptidyltransferase center. The chain is Large ribosomal subunit protein uL6 from Corynebacterium jeikeium (strain K411).